The following is a 244-amino-acid chain: 7-cyano-7-deazaguanine synthase (244 aa).

An ATP-binding site is contributed by 14–24; the sequence is FSGGQDSATCV. Zn(2+)-binding residues include Cys202, Cys217, Cys220, and Cys223.

It belongs to the QueC family. It depends on Zn(2+) as a cofactor.

The catalysed reaction is 7-carboxy-7-deazaguanine + NH4(+) + ATP = 7-cyano-7-deazaguanine + ADP + phosphate + H2O + H(+). It participates in purine metabolism; 7-cyano-7-deazaguanine biosynthesis. Functionally, catalyzes the ATP-dependent conversion of 7-carboxy-7-deazaguanine (CDG) to 7-cyano-7-deazaguanine (preQ(0)). This chain is 7-cyano-7-deazaguanine synthase, found in Burkholderia thailandensis (strain ATCC 700388 / DSM 13276 / CCUG 48851 / CIP 106301 / E264).